The sequence spans 67 residues: ATP synthase F(0) complex subunit 8 (67 aa).

A helical membrane pass occupies residues 8 to 24 (TWLIMISSMILTLFITF). Lys54 carries the N6-acetyllysine; alternate modification. An N6-succinyllysine; alternate modification is found at Lys54. Position 57 is an N6-acetyllysine (Lys57).

Belongs to the ATPase protein 8 family. As to quaternary structure, component of the ATP synthase complex composed at least of ATP5F1A/subunit alpha, ATP5F1B/subunit beta, ATP5MC1/subunit c (homooctomer), MT-ATP6/subunit a, MT-ATP8/subunit 8, ATP5ME/subunit e, ATP5MF/subunit f, ATP5MG/subunit g, ATP5MK/subunit k, ATP5MJ/subunit j, ATP5F1C/subunit gamma, ATP5F1D/subunit delta, ATP5F1E/subunit epsilon, ATP5PF/subunit F6, ATP5PB/subunit b, ATP5PD/subunit d, ATP5PO/subunit OSCP. ATP synthase complex consists of a soluble F(1) head domain (subunits alpha(3) and beta(3)) - the catalytic core - and a membrane F(0) domain - the membrane proton channel (subunits c, a, 8, e, f, g, k and j). These two domains are linked by a central stalk (subunits gamma, delta, and epsilon) rotating inside the F1 region and a stationary peripheral stalk (subunits F6, b, d, and OSCP). Interacts with PRICKLE3.

It localises to the mitochondrion membrane. Functionally, subunit 8, of the mitochondrial membrane ATP synthase complex (F(1)F(0) ATP synthase or Complex V) that produces ATP from ADP in the presence of a proton gradient across the membrane which is generated by electron transport complexes of the respiratory chain. ATP synthase complex consist of a soluble F(1) head domain - the catalytic core - and a membrane F(1) domain - the membrane proton channel. These two domains are linked by a central stalk rotating inside the F(1) region and a stationary peripheral stalk. During catalysis, ATP synthesis in the catalytic domain of F(1) is coupled via a rotary mechanism of the central stalk subunits to proton translocation. In vivo, can only synthesize ATP although its ATP hydrolase activity can be activated artificially in vitro. Part of the complex F(0) domain. In Halichoerus grypus (Gray seal), this protein is ATP synthase F(0) complex subunit 8.